Reading from the N-terminus, the 501-residue chain is Monocarboxylate transporter 1 (501 aa).

The Cytoplasmic portion of the chain corresponds to 1–22 (MPPAVGGPVGYTPPDGGWGWAV). Residues 23 to 44 (VIGAFISIGFSYAFPKSITVFF) form a helical membrane-spanning segment. Residue Lys-38 participates in (S)-lactate binding. The Extracellular portion of the chain corresponds to 45 to 55 (KEIEGIFNATT). Residues 56-80 (SEVSWISSIMLAVMYGGGPISSVLV) form a helical membrane-spanning segment. Residues 81–84 (NKYG) are Cytoplasmic-facing. The helical transmembrane segment at 85–105 (SRPVMIVGGILSGSGLIAASF) threads the bilayer. The Extracellular portion of the chain corresponds to 106 to 109 (CNTV). A helical membrane pass occupies residues 110–132 (QELYFSVGVIGGLGLAFNLNPAL). The Cytoplasmic portion of the chain corresponds to 133–146 (TMIGKYFYKRRPLA). A helical membrane pass occupies residues 147–169 (NGLAMAGSPVFLSTLAPLNQAFF). Residues 170 to 174 (MIYGW) are Extracellular-facing. Residues 175 to 194 (RGSFLILGGLLLNCCVAGAL) form a helical membrane-spanning segment. The Cytoplasmic segment spans residues 195 to 261 (MRPIGPKPTT…FLDLSLFKHR (67 aa)). The interval 201–236 (KPTTAEKEKSKGSLQEAGKYETKKGASDANTDLIGG) is disordered. A phosphoserine mark is found at Ser-210, Ser-213, and Ser-227. Thr-231 is subject to Phosphothreonine. A helical membrane pass occupies residues 262–288 (GFLLYLSGNVLMFFGLFTPLVFLSNYG). The Extracellular portion of the chain corresponds to 289 to 295 (KSKHYSS). A helical transmembrane segment spans residues 296-317 (EKAAFLLSILAFVDMVARPSMG). A H(+)-binding site is contributed by Asp-309. Arg-313 provides a ligand contact to (S)-lactate. Residues 318-328 (LVANTKWVRPR) are Cytoplasmic-facing. The helical transmembrane segment at 329–349 (VQYFFAASIIANGLCHLAAPL) threads the bilayer. The Extracellular portion of the chain corresponds to 350 to 353 (SSTY). Residues 354–375 (IELCIYAGFFGFAFGWLSSVLF) form a helical membrane-spanning segment. At 376-389 (ETLMDLVGPQRFSS) the chain is on the cytoplasmic side. A helical transmembrane segment spans residues 390 to 410 (AVGLVTIVECCPVLLGPPVLG). The Extracellular portion of the chain corresponds to 411–421 (RLNDIYGDYKY). Residues 422-443 (TYWACGIILIVAGIYLFIGMGI) traverse the membrane as a helical segment. The Cytoplasmic segment spans residues 444–501 (NYRLLEKEQKAEKQQKKESKDEETNVDVAEKPKEVIDAAESPEHKATEEDPKEAESPV). Residues 454 to 501 (AEKQQKKESKDEETNVDVAEKPKEVIDAAESPEHKATEEDPKEAESPV) form a disordered region. Ser-462 bears the Phosphoserine mark. Thr-467 is modified (phosphothreonine). A phosphoserine mark is found at Ser-484 and Ser-499.

Belongs to the major facilitator superfamily. Monocarboxylate porter (TC 2.A.1.13) family. As to quaternary structure, interacts with BSG; interaction mediates SLC16A1 targeting to the plasma membrane. Interacts with EMB; interaction mediates SLC16A1 targeting to the plasma membrane.

Its subcellular location is the cell membrane. It is found in the basolateral cell membrane. The protein localises to the apical cell membrane. It carries out the reaction (S)-lactate(in) + H(+)(in) = (S)-lactate(out) + H(+)(out). The enzyme catalyses acetate(out) + H(+)(out) = acetate(in) + H(+)(in). The catalysed reaction is acetoacetate(out) + H(+)(out) = acetoacetate(in) + H(+)(in). It catalyses the reaction pyruvate(out) + H(+)(out) = pyruvate(in) + H(+)(in). It carries out the reaction (R)-3-hydroxybutanoate(out) + H(+)(out) = (R)-3-hydroxybutanoate(in) + H(+)(in). The enzyme catalyses 3-methyl-2-oxobutanoate(out) + H(+)(out) = 3-methyl-2-oxobutanoate(in) + H(+)(in). The catalysed reaction is 4-methyl-2-oxopentanoate(out) + H(+)(out) = 4-methyl-2-oxopentanoate(in) + H(+)(in). It catalyses the reaction succinate(in) + 2 H(+)(in) = succinate(out) + 2 H(+)(out). In terms of biological role, bidirectional proton-coupled monocarboxylate transporter. Catalyzes the rapid transport across the plasma membrane of many monocarboxylates such as lactate, pyruvate, acetate and the ketone bodies acetoacetate and beta-hydroxybutyrate, and thus contributes to the maintenance of intracellular pH. The transport direction is determined by the proton motive force and the concentration gradient of the substrate monocarboxylate. MCT1 is a major lactate exporter. Plays a role in cellular responses to a high-fat diet by modulating the cellular levels of lactate and pyruvate that contribute to the regulation of central metabolic pathways and insulin secretion, with concomitant effects on plasma insulin levels and blood glucose homeostasis. Facilitates the protonated monocarboxylate form of succinate export, that its transient protonation upon muscle cell acidification in exercising muscle and ischemic heart. Functions via alternate outward- and inward-open conformation states. Protonation and deprotonation of 309-Asp is essential for the conformational transition. In Bos taurus (Bovine), this protein is Monocarboxylate transporter 1 (SLC16A1).